A 224-amino-acid chain; its full sequence is UPF0173 metal-dependent hydrolase STH3160 (224 aa).

This sequence belongs to the UPF0173 family.

The protein is UPF0173 metal-dependent hydrolase STH3160 of Symbiobacterium thermophilum (strain DSM 24528 / JCM 14929 / IAM 14863 / T).